A 386-amino-acid polypeptide reads, in one-letter code: Succinate--CoA ligase [ADP-forming] subunit beta (386 aa).

One can recognise an ATP-grasp domain in the interval Lys9–Arg244. Residues Lys46, Gly53–Gly55, Glu99, Cys102, and Glu107 contribute to the ATP site. The Mg(2+) site is built by Asn199 and Asp213. Substrate contacts are provided by residues Asn264 and Gly321–Met323.

It belongs to the succinate/malate CoA ligase beta subunit family. In terms of assembly, heterotetramer of two alpha and two beta subunits. Mg(2+) is required as a cofactor.

The enzyme catalyses succinate + ATP + CoA = succinyl-CoA + ADP + phosphate. It catalyses the reaction GTP + succinate + CoA = succinyl-CoA + GDP + phosphate. It functions in the pathway carbohydrate metabolism; tricarboxylic acid cycle; succinate from succinyl-CoA (ligase route): step 1/1. Functionally, succinyl-CoA synthetase functions in the citric acid cycle (TCA), coupling the hydrolysis of succinyl-CoA to the synthesis of either ATP or GTP and thus represents the only step of substrate-level phosphorylation in the TCA. The beta subunit provides nucleotide specificity of the enzyme and binds the substrate succinate, while the binding sites for coenzyme A and phosphate are found in the alpha subunit. This is Succinate--CoA ligase [ADP-forming] subunit beta from Rickettsia peacockii (strain Rustic).